A 773-amino-acid polypeptide reads, in one-letter code: Mitochondrial inner membrane m-AAA protease component yta12 (773 aa).

Residues 83–119 (FSVTSKRSQNGSSGSNSDANGRKNGQKNDDSKKKGLN) form a disordered region. Residues 87-101 (SKRSQNGSSGSNSDA) are compositionally biased toward low complexity. Helical transmembrane passes span 126 to 146 (VFEI…AYIL) and 239 to 259 (VLAT…VIYL). ATP-binding residues include Val-298, Ala-299, Thr-340, Gly-341, Lys-342, Thr-343, Leu-344, and His-479. His-561 is a Zn(2+) binding site. Glu-562 is a catalytic residue. 2 residues coordinate Zn(2+): His-565 and Asp-638. Residues 752 to 773 (EYKNDHDPRNPPIPPSPQQPSA) are disordered. Pro residues predominate over residues 761 to 773 (NPPIPPSPQQPSA).

It in the N-terminal section; belongs to the AAA ATPase family. This sequence in the C-terminal section; belongs to the peptidase M41 family. As to quaternary structure, component of the m-AAA protease complex. The cofactor is Zn(2+).

It localises to the mitochondrion membrane. The catalysed reaction is ATP + H2O = ADP + phosphate + H(+). In terms of biological role, catalytic component of the m-AAA protease, a protease that plays a key role in proteostasis of inner mitochondrial membrane proteins. Possesses both ATPase and protease activities: the ATPase activity is required to unfold substrates, threading them into the internal proteolytic cavity for hydrolysis into small peptide fragments. The complex is necessary for the assembly of mitochondrial respiratory chain and ATPase complexes. The m-AAA protease carries out protein quality control in the inner membrane of the mitochondria by mediating degradation of mistranslated or misfolded polypeptides. It also mediates protein maturation of the mitochondrial ribosomal subunit mrpl32/bL32m by catalyzing the cleavage of the presequence of mrpl32/bL32m prior to assembly into the mitochondrial ribosome. Also acts as a membrane protein dislocase: required to dislocate moderately hydrophobic transmembrane segments from the membrane. The sequence is that of Mitochondrial inner membrane m-AAA protease component yta12 (yta12) from Schizosaccharomyces pombe (strain 972 / ATCC 24843) (Fission yeast).